Reading from the N-terminus, the 602-residue chain is DNA damage-binding protein CMR1 (602 aa).

The tract at residues 35–85 (KEVDNKSFSSPSSQKRRKTTKKPVIKKEISEPSRRSRRIAGIKSELEDPKQ) is disordered. Basic residues predominate over residues 48 to 58 (QKRRKTTKKPV). Residues 59 to 68 (IKKEISEPSR) show a composition bias toward basic and acidic residues. WD repeat units lie at residues 229 to 270 (ICHN…NDTK), 291 to 328 (RNVS…STEL), 390 to 430 (LHDK…KSVY), 446 to 484 (NSRL…KLDN), 526 to 569 (GRWV…LAHL), and 571 to 602 (EQVG…YLFE).

Belongs to the WD repeat DDB2/WDR76 family.

Functionally, DNA-binding protein that binds to both single- and double-stranded DNA. Binds preferentially to UV-damaged DNA. May be involved in DNA-metabolic processes. The protein is DNA damage-binding protein CMR1 of Candida albicans (strain SC5314 / ATCC MYA-2876) (Yeast).